Consider the following 255-residue polypeptide: Vitamin B12 import ATP-binding protein BtuD (255 aa).

The ABC transporter domain occupies 2 to 240 (MHVKHIALGS…EGLAEVFQTQ (239 aa)). 30 to 37 (GPNGSGKS) is an ATP binding site.

The protein belongs to the ABC transporter superfamily. Vitamin B12 importer (TC 3.A.1.13.1) family. The complex is composed of two ATP-binding proteins (BtuD), two transmembrane proteins (BtuC) and a solute-binding protein (BtuF).

The protein resides in the cell inner membrane. It carries out the reaction an R-cob(III)alamin(out) + ATP + H2O = an R-cob(III)alamin(in) + ADP + phosphate + H(+). In terms of biological role, part of the ABC transporter complex BtuCDF involved in vitamin B12 import. Responsible for energy coupling to the transport system. The sequence is that of Vitamin B12 import ATP-binding protein BtuD from Vibrio campbellii (strain ATCC BAA-1116).